The primary structure comprises 690 residues: Eukaryotic translation initiation factor 3 subunit B (690 aa).

Basic and acidic residues predominate over residues 1–11 (MAKKKSEDHSG). The tract at residues 1–37 (MAKKKSEDHSGGDANDSDYNEEPNFEDPPNFVDNISD) is disordered. Over residues 15-25 (NDSDYNEEPNF) the composition is skewed to acidic residues. The region spanning 57-141 (SVVVVDNIPK…HTFAVNLFTD (85 aa)) is the RRM domain. WD repeat units lie at residues 207–246 (TRERFTDTFVKWSPLGTYVVTFHKPGVAIWGGSSFQKIQK), 247–289 (FPHT…EKRS), 293–331 (DGMSVLSMFRWSHDDKYVARMGDNSIHIYETPSFYLLDL), 334–369 (IKIPGIRGFSWSPTDNVIAYWVEEQNQIPARVTLME), 442–484 (EIRE…KPSL), and 530–575 (PDHF…IKRT). Residues 614–645 (QKDRLRLTRASKELLEKRSQLRETFMEYRNKR) adopt a coiled-coil conformation.

The protein belongs to the eIF-3 subunit B family. In terms of assembly, component of the eukaryotic translation initiation factor 3 (eIF-3) complex. The eIF-3 complex interacts with pix. Interacts with mxt.

Its subcellular location is the cytoplasm. Functionally, RNA-binding component of the eukaryotic translation initiation factor 3 (eIF-3) complex, which is involved in protein synthesis of a specialized repertoire of mRNAs and, together with other initiation factors, stimulates binding of mRNA and methionyl-tRNAi to the 40S ribosome. The eIF-3 complex specifically targets and initiates translation of a subset of mRNAs involved in cell proliferation. This is Eukaryotic translation initiation factor 3 subunit B from Drosophila pseudoobscura pseudoobscura (Fruit fly).